The chain runs to 262 residues: 27 kDa lipoprotein antigen (262 aa).

An N-terminal signal peptide occupies residues 1–28 (MSASCAVPRLTRFAVFAVAGATALSLSA). 2 stretches are compositionally biased toward low complexity: residues 28 to 57 (ACGS…PSST) and 148 to 158 (STPGGASSTPP). 2 disordered regions span residues 28 to 60 (ACGS…TPNA) and 138 to 171 (VNGT…KPAW). A lipid anchor (N-palmitoyl cysteine) is attached at cysteine 29. The S-diacylglycerol cysteine moiety is linked to residue cysteine 29.

It is found in the cell membrane. This Mycobacterium intracellulare protein is 27 kDa lipoprotein antigen (Mi43).